The primary structure comprises 423 residues: uncharacterized protein (423 aa).

The region spanning 75–145 (LHVVVTQPIA…PIVNNIKVAG (71 aa)) is the BON domain.

Belongs to the bacterial secretin family.

Its function is as follows. Involved in the secretion of an unknown compound. This is an uncharacterized protein from Sinorhizobium fredii (strain NBRC 101917 / NGR234).